Here is a 121-residue protein sequence, read N- to C-terminus: B-box domain protein 31 (121 aa).

The B box-type; atypical zinc-finger motif lies at 26–72 (SVPVRCELCDGDASVFCEADSAFLCRKCDRWVHGANFLAWRHVRRVL). A PFVFL motif is present at residues 117–121 (PFVFL).

As to expression, highly expressed in shoot apical meristems and in vascular tissues of leaves. Also detected in petioles.

In terms of biological role, developmental regulator acting by forming heterodimeric complexes, that sequester CO and CO-like (COL) proteins into non-functional complexes. Involved in the CO-mediated long-day flowering-promotion pathway. Engages CO and the transcriptional repressor TPL in a tripartite complex. This chain is B-box domain protein 31, found in Arabidopsis thaliana (Mouse-ear cress).